The chain runs to 168 residues: NADH-ubiquinone oxidoreductase chain 6 (168 aa).

5 helical membrane passes run 1–21 (MKMMTIYIISLLLMIGFVAFA), 27–47 (IYGGLSLVVSGGLGCGMVVSL), 50–70 (VFLGLVVFLVYLGGMLVVFGY), 87–107 (VVAFIMLLFVLLLQVGWYFMS), and 143–163 (WALALLGWILFMTIYVVLEVV).

It belongs to the complex I subunit 6 family. In terms of assembly, core subunit of respiratory chain NADH dehydrogenase (Complex I) which is composed of 45 different subunits.

It is found in the mitochondrion inner membrane. It carries out the reaction a ubiquinone + NADH + 5 H(+)(in) = a ubiquinol + NAD(+) + 4 H(+)(out). Core subunit of the mitochondrial membrane respiratory chain NADH dehydrogenase (Complex I) which catalyzes electron transfer from NADH through the respiratory chain, using ubiquinone as an electron acceptor. Essential for the catalytic activity and assembly of complex I. This Didelphis virginiana (North American opossum) protein is NADH-ubiquinone oxidoreductase chain 6 (MT-ND6).